The sequence spans 346 residues: Short-wave-sensitive opsin 1 (346 aa).

The Extracellular portion of the chain corresponds to 1-31; sequence MSGEDDFYLFQNISSVGPWDGPQYHLAPVWA. An N-linked (GlcNAc...) asparagine glycan is attached at Asn-12. A helical transmembrane segment spans residues 32–56; it reads FRLQAAFMGFVFFVGTPLNAIVLVA. Residues 57-68 lie on the Cytoplasmic side of the membrane; it reads TLHYKKLRQPLN. A helical membrane pass occupies residues 69–94; the sequence is YILVNVSLGGFLFCIFSVFTVFIASC. Residues 95–108 lie on the Extracellular side of the membrane; sequence HGYFLFGRHVCALE. A disulfide bridge links Cys-105 with Cys-182. The helical transmembrane segment at 109 to 128 threads the bilayer; it reads AFLGSVAGLVTGWSLAFLAF. Residues 129–147 lie on the Cytoplasmic side of the membrane; it reads ERYVVICKPFGSIRFNSKH. The helical transmembrane segment at 148–171 threads the bilayer; it reads ALMVVLATWIIGIGVSIPPFFGWS. Residues 172-197 are Extracellular-facing; the sequence is RFIPEGLQCSCGPDWYTVGTKYRSEY. Residues 198–225 form a helical membrane-spanning segment; the sequence is YTWFLFIFCFIIPLSLICFSYSQLLRTL. The Cytoplasmic portion of the chain corresponds to 226 to 247; that stretch reads RAVAAQQQESATTQKAEREVSH. Residues 248–271 form a helical membrane-spanning segment; it reads MVVVMVGSFCLCYVPYAALAMYMV. Residues 272–279 lie on the Extracellular side of the membrane; that stretch reads NNRNHGLD. A helical transmembrane segment spans residues 280 to 304; that stretch reads LRLVTIPAFFSKSSCVYNPIIYCFM. An N6-(retinylidene)lysine modification is found at Lys-291. Over 305 to 346 the chain is Cytoplasmic; the sequence is NKQFRACILEMVCRKPMADESDVSGSQKTEVSTVSSSKVGPH. The segment at 324-346 is disordered; the sequence is ESDVSGSQKTEVSTVSSSKVGPH. Residues 330–346 are compositionally biased toward low complexity; that stretch reads SQKTEVSTVSSSKVGPH.

Belongs to the G-protein coupled receptor 1 family. Opsin subfamily. Post-translationally, phosphorylated on some or all of the serine and threonine residues present in the C-terminal region. Expressed in the inner and outer segments of cone photoreceptor cells in the retina (at protein level).

It localises to the cell membrane. It is found in the photoreceptor inner segment. The protein resides in the cell projection. The protein localises to the cilium. Its subcellular location is the photoreceptor outer segment. It localises to the cytoplasm. It is found in the perinuclear region. Its function is as follows. Visual pigments are the light-absorbing molecules that mediate vision. They consist of an apoprotein, opsin, covalently linked to cis-retinal. Required for the maintenance of cone outer segment organization in the ventral retina, but not essential for the maintenance of functioning cone photoreceptors. Involved in ensuring correct abundance and localization of retinal membrane proteins. May increase spectral sensitivity in dim light. The protein is Short-wave-sensitive opsin 1 (Opn1sw) of Mus musculus (Mouse).